The chain runs to 390 residues: Cathepsin D (390 aa).

The propeptide at V1 to Q44 is activation peptide. One can recognise a Peptidase A1 domain in the interval Y59 to A385. 2 disulfides stabilise this stretch: C71-C140 and C90-C97. D77 is a catalytic residue. N114 and N241 each carry an N-linked (GlcNAc...) asparagine glycan. Residues C264 and C268 are joined by a disulfide bond. The active site involves D273. A disulfide bridge connects residues C307 and C344.

It belongs to the peptidase A1 family. In terms of assembly, consists of a light chain and a heavy chain. Interacts with ADAM30; this leads to activation of CTSD. Interacts with GRN; stabilizes CTSD; increases its proteolytic activity. Post-translationally, N- and O-glycosylated. Undergoes proteolytic cleavage and activation by ADAM30.

It localises to the lysosome. Its subcellular location is the melanosome. The protein localises to the secreted. The protein resides in the extracellular space. It catalyses the reaction Specificity similar to, but narrower than, that of pepsin A. Does not cleave the 4-Gln-|-His-5 bond in B chain of insulin.. Functionally, acid protease active in intracellular protein breakdown. Plays a role in APP processing following cleavage and activation by ADAM30 which leads to APP degradation. This is Cathepsin D (CTSD) from Bos taurus (Bovine).